A 487-amino-acid chain; its full sequence is Glutamate--tRNA ligase (487 aa).

The short motif at 13–23 (PSPTGLFHIGG) is the 'HIGH' region element. A 'KMSKS' region motif is present at residues 255–259 (KLSKR). K258 is an ATP binding site.

Belongs to the class-I aminoacyl-tRNA synthetase family. Glutamate--tRNA ligase type 1 subfamily. As to quaternary structure, monomer.

Its subcellular location is the cytoplasm. It carries out the reaction tRNA(Glu) + L-glutamate + ATP = L-glutamyl-tRNA(Glu) + AMP + diphosphate. Its function is as follows. Catalyzes the attachment of glutamate to tRNA(Glu) in a two-step reaction: glutamate is first activated by ATP to form Glu-AMP and then transferred to the acceptor end of tRNA(Glu). This Malacoplasma penetrans (strain HF-2) (Mycoplasma penetrans) protein is Glutamate--tRNA ligase.